An 84-amino-acid chain; its full sequence is Polyketide-8 synthase acyl carrier protein 1 (84 aa).

The Carrier domain maps to 7 to 82 (AARKQEIKEI…GVYVVVSEAA (76 aa)). At S42 the chain carries O-(pantetheine 4'-phosphoryl)serine.

Post-translationally, 4'-phosphopantetheine is transferred from CoA to a specific serine of the apo-ACP-like protein.

Functionally, acyl carrier protein. In Streptomyces avermitilis (strain ATCC 31267 / DSM 46492 / JCM 5070 / NBRC 14893 / NCIMB 12804 / NRRL 8165 / MA-4680), this protein is Polyketide-8 synthase acyl carrier protein 1.